Here is a 408-residue protein sequence, read N- to C-terminus: Zinc finger protein 764 (408 aa).

The KRAB domain occupies 26 to 97 (VSFADVAVYF…AAQDPEVAKC (72 aa)). The segment at 91–167 (DPEVAKCQTQ…GRPSLCAHPP (77 aa)) is disordered. C2H2-type zinc fingers lie at residues 175 to 197 (HGCY…VYSH), 203 to 225 (FHCT…RAIH), 231 to 253 (HRCL…LRVH), 259 to 281 (YGCA…RRVH), 287 to 309 (FPCP…VRTH), 315 to 337 (YPCP…RRTH), and 343 to 365 (YPCP…QWVH).

Belongs to the krueppel C2H2-type zinc-finger protein family. In terms of assembly, interacts (via KRAB domain) with NR3C1/GR (via NR LBD domain); the interaction regulates transcription factor activity of NR3C1 by directing its actions toward certain biologic pathways.

The protein localises to the nucleus. Functionally, zinc finger protein that functions as a cofactor for steroid hormone receptors, such as NR3C1/GR. Directs NR3C1/GR transcriptional activity toward specific biologic pathways by changing NR3C1/GR binding and transcriptional activity on the glucocorticoid-responsive genes. This Homo sapiens (Human) protein is Zinc finger protein 764.